Here is a 448-residue protein sequence, read N- to C-terminus: Tryptophan dimethylallyltransferase 1 (448 aa).

L-tryptophan contacts are provided by residues 80 to 81 (IL) and Glu89. The substrate site is built by Arg100, Lys186, and Tyr188. Residues Tyr190 and Arg249 each contribute to the L-tryptophan site. Residues Arg262, Lys264, Tyr266, Gln348, Tyr350, Tyr414, and Tyr418 each coordinate substrate.

This sequence belongs to the tryptophan dimethylallyltransferase family. Homodimer.

It catalyses the reaction L-tryptophan + dimethylallyl diphosphate = 4-(3-methylbut-2-enyl)-L-tryptophan + diphosphate. Its pathway is alkaloid biosynthesis; ergot alkaloid biosynthesis. Functionally, tryptophan dimethylallyltransferase; part of the gene cluster that mediates the biosynthesis of fungal ergot alkaloid. DmaW catalyzes the first step of ergot alkaloid biosynthesis by condensing dimethylallyl diphosphate (DMAP) and tryptophan to form 4-dimethylallyl-L-tryptophan. The second step is catalyzed by the methyltransferase easF that methylates 4-dimethylallyl-L-tryptophan in the presence of S-adenosyl-L-methionine, resulting in the formation of 4-dimethylallyl-L-abrine. The catalase easC and the FAD-dependent oxidoreductase easE then transform 4-dimethylallyl-L-abrine to chanoclavine-I which is further oxidized by easD in the presence of NAD(+), resulting in the formation of chanoclavine-I aldehyde. Agroclavine dehydrogenase easG then mediates the conversion of chanoclavine-I aldehyde to agroclavine via a non-enzymatic adduct reaction: the substrate is an iminium intermediate that is formed spontaneously from chanoclavine-I aldehyde in the presence of glutathione. The presence of easA is not required to complete this reaction. Further conversion of agroclavine to paspalic acid is a two-step process involving oxidation of agroclavine to elymoclavine and of elymoclavine to paspalic acid, the second step being performed by the elymoclavine oxidase cloA. Paspalic acid is then further converted to D-lysergic acid. Ergopeptines are assembled from D-lysergic acid and three different amino acids by the D-lysergyl-peptide-synthetases composed each of a monomudular and a trimodular nonribosomal peptide synthetase subunit. LpsB and lpsC encode the monomodular subunits responsible for D-lysergic acid activation and incorporation into the ergopeptine backbone. LpsA1 and A2 subunits encode the trimodular nonribosomal peptide synthetase assembling the tripeptide portion of ergopeptines. LpsA1 is responsible for formation of the major ergopeptine, ergotamine, and lpsA2 for alpha-ergocryptine, the minor ergopeptine of the total alkaloid mixture elaborated by C.purpurea. D-lysergyl-tripeptides are assembled by the nonribosomal peptide synthetases and released as N-(D-lysergyl-aminoacyl)-lactams. Cyclolization of the D-lysergyl-tripeptides is performed by the Fe(2+)/2-ketoglutarate-dependent dioxygenase easH which introduces a hydroxyl group into N-(D-lysergyl-aminoacyl)-lactam at alpha-C of the aminoacyl residue followed by spontaneous condensation with the terminal lactam carbonyl group. The protein is Tryptophan dimethylallyltransferase 1 of Claviceps purpurea (strain 20.1) (Ergot fungus).